The sequence spans 86 residues: Small ribosomal subunit protein bS20 (86 aa).

The protein belongs to the bacterial ribosomal protein bS20 family.

In terms of biological role, binds directly to 16S ribosomal RNA. This Mycolicibacterium gilvum (strain PYR-GCK) (Mycobacterium gilvum (strain PYR-GCK)) protein is Small ribosomal subunit protein bS20.